A 275-amino-acid polypeptide reads, in one-letter code: UPF0328 protein ECU05_0050 (275 aa).

The protein belongs to the UPF0328 family.

The sequence is that of UPF0328 protein ECU05_0050 from Encephalitozoon cuniculi (strain GB-M1) (Microsporidian parasite).